Consider the following 473-residue polypeptide: Benzoyl-CoA oxygenase component B (473 aa).

This sequence belongs to the benzoyl-CoA oxygenase component B family. Monomer. The subunit composition of the active BoxA/BoxB protein complex is not known. Fe cation serves as cofactor.

It catalyses the reaction benzoyl-CoA + NADPH + O2 + H(+) = 2,3-epoxy-2,3-dihydrobenzoyl-CoA + NADP(+) + H2O. In terms of biological role, the BoxA/BoxB complex catalyzes the aerobic reduction/oxygenation of the aromatic ring of benzoyl-CoA to form 2,3-epoxy-2,3-dihydrobenzoyl-CoA. BoxB acts as the benzoyl-CoA oxygenase, after being reduced by the reductase component BoxA. BoxAB does not act on NADH or benzoate. The protein is Benzoyl-CoA oxygenase component B (boxB) of Aromatoleum evansii (Azoarcus evansii).